The chain runs to 106 residues: Large ribosomal subunit protein eL42Q (106 aa).

This sequence belongs to the eukaryotic ribosomal protein eL42 family.

The chain is Large ribosomal subunit protein eL42Q (RIM-C) from Candida maltosa (Yeast).